We begin with the raw amino-acid sequence, 273 residues long: 3-methyl-2-oxobutanoate hydroxymethyltransferase 3 (273 aa).

Aspartate 49 and aspartate 88 together coordinate Mg(2+). 3-methyl-2-oxobutanoate is bound by residues 49–50 (DS), aspartate 88, and lysine 118. Glutamate 120 lines the Mg(2+) pocket. The active-site Proton acceptor is glutamate 187.

The protein belongs to the PanB family. As to quaternary structure, homodecamer; pentamer of dimers. It depends on Mg(2+) as a cofactor.

It is found in the cytoplasm. The enzyme catalyses 3-methyl-2-oxobutanoate + (6R)-5,10-methylene-5,6,7,8-tetrahydrofolate + H2O = 2-dehydropantoate + (6S)-5,6,7,8-tetrahydrofolate. Its pathway is cofactor biosynthesis; (R)-pantothenate biosynthesis; (R)-pantoate from 3-methyl-2-oxobutanoate: step 1/2. In terms of biological role, catalyzes the reversible reaction in which hydroxymethyl group from 5,10-methylenetetrahydrofolate is transferred onto alpha-ketoisovalerate to form ketopantoate. The polypeptide is 3-methyl-2-oxobutanoate hydroxymethyltransferase 3 (Bradyrhizobium diazoefficiens (strain JCM 10833 / BCRC 13528 / IAM 13628 / NBRC 14792 / USDA 110)).